The chain runs to 348 residues: Endoglucanase-6B (348 aa).

Substrate-binding residues include Trp-52 and Ser-54. Active-site proton donor residues include Asp-92 and Asp-139. Asn-183, Trp-186, Asn-222, Trp-282, Lys-310, and Glu-314 together coordinate substrate. The span at 222 to 241 (NYNPYSTSNPPPYTSGSPSP) shows a compositional bias: low complexity. The tract at residues 222–244 (NYNPYSTSNPPPYTSGSPSPDES) is disordered.

The protein belongs to the glycosyl hydrolase 6 (cellulase B) family. As to quaternary structure, monomer.

The catalysed reaction is Endohydrolysis of (1-&gt;4)-beta-D-glucosidic linkages in cellulose, lichenin and cereal beta-D-glucans.. Its function is as follows. Plays a central role in the recycling of plant biomass. The biological conversion of cellulose to glucose generally requires three types of hydrolytic enzymes: (1) Endoglucanases which cut internal beta-1,4-glucosidic bonds; (2) Exocellobiohydrolases that cut the disaccharide cellobiose from the non-reducing end of the cellulose polymer chain; (3) Beta-1,4-glucosidases which hydrolyze the cellobiose and other short cello-oligosaccharides to glucose. This Humicola insolens (Soft-rot fungus) protein is Endoglucanase-6B.